Here is a 142-residue protein sequence, read N- to C-terminus: Transcription antitermination protein NusB (142 aa).

This sequence belongs to the NusB family.

Functionally, involved in transcription antitermination. Required for transcription of ribosomal RNA (rRNA) genes. Binds specifically to the boxA antiterminator sequence of the ribosomal RNA (rrn) operons. In Thermotoga petrophila (strain ATCC BAA-488 / DSM 13995 / JCM 10881 / RKU-1), this protein is Transcription antitermination protein NusB.